A 181-amino-acid polypeptide reads, in one-letter code: Acireductone dioxygenase (181 aa).

Over residues 1-10 the composition is skewed to acidic residues; that stretch reads MRAYIYDEES. A disordered region spans residues 1–23; it reads MRAYIYDEESQLSPQDEHESSQS. Fe(2+)-binding residues include His-82, His-84, Glu-88, and His-128. Ni(2+)-binding residues include His-82, His-84, Glu-88, and His-128.

The protein belongs to the acireductone dioxygenase (ARD) family. It depends on Fe(2+) as a cofactor. Requires Ni(2+) as cofactor.

Its subcellular location is the cytoplasm. The protein localises to the nucleus. It carries out the reaction 1,2-dihydroxy-5-(methylsulfanyl)pent-1-en-3-one + O2 = 4-methylsulfanyl-2-oxobutanoate + formate + 2 H(+). The catalysed reaction is 1,2-dihydroxy-5-(methylsulfanyl)pent-1-en-3-one + O2 = 3-(methylsulfanyl)propanoate + CO + formate + 2 H(+). It functions in the pathway amino-acid biosynthesis; L-methionine biosynthesis via salvage pathway; L-methionine from S-methyl-5-thio-alpha-D-ribose 1-phosphate: step 5/6. Catalyzes 2 different reactions between oxygen and the acireductone 1,2-dihydroxy-3-keto-5-methylthiopentene (DHK-MTPene) depending upon the metal bound in the active site. Fe-containing acireductone dioxygenase (Fe-ARD) produces formate and 2-keto-4-methylthiobutyrate (KMTB), the alpha-ketoacid precursor of methionine in the methionine recycle pathway. Ni-containing acireductone dioxygenase (Ni-ARD) produces methylthiopropionate, carbon monoxide and formate, and does not lie on the methionine recycle pathway. The protein is Acireductone dioxygenase of Puccinia graminis f. sp. tritici (strain CRL 75-36-700-3 / race SCCL) (Black stem rust fungus).